Here is a 392-residue protein sequence, read N- to C-terminus: tRNA-specific 2-thiouridylase MnmA (392 aa).

ATP is bound by residues G18–S25 and M44. Residues N104–D106 form an interaction with target base in tRNA region. C109 functions as the Nucleophile in the catalytic mechanism. C109 and C208 form a disulfide bridge. G133 is an ATP binding site. An interaction with tRNA region spans residues K158–Q160. Catalysis depends on C208, which acts as the Cysteine persulfide intermediate. Positions R320–Y321 are interaction with tRNA.

Belongs to the MnmA/TRMU family.

It is found in the cytoplasm. It catalyses the reaction S-sulfanyl-L-cysteinyl-[protein] + uridine(34) in tRNA + AH2 + ATP = 2-thiouridine(34) in tRNA + L-cysteinyl-[protein] + A + AMP + diphosphate + H(+). Its function is as follows. Catalyzes the 2-thiolation of uridine at the wobble position (U34) of tRNA, leading to the formation of s(2)U34. The polypeptide is tRNA-specific 2-thiouridylase MnmA (Marinobacter nauticus (strain ATCC 700491 / DSM 11845 / VT8) (Marinobacter aquaeolei)).